A 387-amino-acid chain; its full sequence is Phosphoglycerate kinase (387 aa).

Substrate contacts are provided by residues 21 to 23, arginine 36, 59 to 62, arginine 113, and arginine 146; these read DLN and HLGR. ATP is bound by residues lysine 197, glutamate 314, and 340 to 343; that span reads GGDT.

Belongs to the phosphoglycerate kinase family. In terms of assembly, monomer.

The protein localises to the cytoplasm. It catalyses the reaction (2R)-3-phosphoglycerate + ATP = (2R)-3-phospho-glyceroyl phosphate + ADP. Its pathway is carbohydrate degradation; glycolysis; pyruvate from D-glyceraldehyde 3-phosphate: step 2/5. This is Phosphoglycerate kinase from Klebsiella pneumoniae (strain 342).